Reading from the N-terminus, the 302-residue chain is MDTQAVRAYLLDLQDRITTAVGTLDGGTFVTDTWDKPPTERLRGSGRTCILENGAVLERGGVGFSHVMGDTLPPSATANRPELAGRGFEAMGVSLVFHPRNPYAPTVHMNVRCFVAQRPDAEPVWWFGGGMDLTPYYGFAEDAAHFHRTCKQALEPFGEELYPRFKQWCDDYFYLKHRKEARGVGGIFFDDFAELGFERSFEMMRAVGDALLPAWLPIAEQRHATPYGERERAFQAYRRGRYVEFNLVFDRGTLFGLQSGGRTESILMSMPPVANWRYDWQPEPGSPEAALYTDFLPARDWV.

Substrate is bound at residue Ser-94. Residues His-98 and His-108 each contribute to the a divalent metal cation site. Catalysis depends on His-108, which acts as the Proton donor. Substrate is bound at residue 110–112 (NVR). The a divalent metal cation site is built by His-147 and His-177. The tract at residues 242–277 (YVEFNLVFDRGTLFGLQSGGRTESILMSMPPVANWR) is important for dimerization. 260-262 (GGR) is a substrate binding site.

Belongs to the aerobic coproporphyrinogen-III oxidase family. As to quaternary structure, homodimer. A divalent metal cation serves as cofactor.

Its subcellular location is the cytoplasm. It catalyses the reaction coproporphyrinogen III + O2 + 2 H(+) = protoporphyrinogen IX + 2 CO2 + 2 H2O. It functions in the pathway porphyrin-containing compound metabolism; protoporphyrin-IX biosynthesis; protoporphyrinogen-IX from coproporphyrinogen-III (O2 route): step 1/1. Involved in the heme biosynthesis. Catalyzes the aerobic oxidative decarboxylation of propionate groups of rings A and B of coproporphyrinogen-III to yield the vinyl groups in protoporphyrinogen-IX. The protein is Oxygen-dependent coproporphyrinogen-III oxidase of Ralstonia nicotianae (strain ATCC BAA-1114 / GMI1000) (Ralstonia solanacearum).